A 937-amino-acid polypeptide reads, in one-letter code: Bifunctional glutamine synthetase adenylyltransferase/adenylyl-removing enzyme (937 aa).

Residues 1 to 436 form an adenylyl removase region; the sequence is MSQPIPSASP…AAEFAELLAP (436 aa). The tract at residues 443 to 937 is adenylyl transferase; that stretch reads PDTLADYWRA…QLRFQPGKGA (495 aa).

This sequence belongs to the GlnE family. The cofactor is Mg(2+).

It catalyses the reaction [glutamine synthetase]-O(4)-(5'-adenylyl)-L-tyrosine + phosphate = [glutamine synthetase]-L-tyrosine + ADP. The catalysed reaction is [glutamine synthetase]-L-tyrosine + ATP = [glutamine synthetase]-O(4)-(5'-adenylyl)-L-tyrosine + diphosphate. In terms of biological role, involved in the regulation of glutamine synthetase GlnA, a key enzyme in the process to assimilate ammonia. When cellular nitrogen levels are high, the C-terminal adenylyl transferase (AT) inactivates GlnA by covalent transfer of an adenylyl group from ATP to specific tyrosine residue of GlnA, thus reducing its activity. Conversely, when nitrogen levels are low, the N-terminal adenylyl removase (AR) activates GlnA by removing the adenylyl group by phosphorolysis, increasing its activity. The regulatory region of GlnE binds the signal transduction protein PII (GlnB) which indicates the nitrogen status of the cell. The protein is Bifunctional glutamine synthetase adenylyltransferase/adenylyl-removing enzyme of Xanthomonas campestris pv. campestris (strain ATCC 33913 / DSM 3586 / NCPPB 528 / LMG 568 / P 25).